Reading from the N-terminus, the 497-residue chain is Iron-sulfur cluster assembly factor IBA57, mitochondrial (497 aa).

Residues 1–27 constitute a mitochondrion transit peptide; sequence MFISRRCRIKGFTLKNLLWFRSSSTRF. The disordered stretch occupies residues 414-433; it reads PTLNPFTNKPPERTKRKQRP.

It belongs to the GcvT family. CAF17/IBA57 subfamily. As to quaternary structure, interacts with CCR4, ISA1 and ISA2.

It localises to the mitochondrion matrix. In terms of biological role, required for lysine and glutamate prototrophy and mitochondrial genome maintenance. Has a role in the maturation of mitochondrial aconitase-type and radical-SAM Fe/S proteins biotin synthase and lipoic acid synthase. This chain is Iron-sulfur cluster assembly factor IBA57, mitochondrial, found in Saccharomyces cerevisiae (strain ATCC 204508 / S288c) (Baker's yeast).